The chain runs to 51 residues: Protein YrhD (51 aa).

This is Protein YrhD (yrhD) from Escherichia coli (strain K12).